Here is a 221-residue protein sequence, read N- to C-terminus: MAELDFNIQATVRTDKGKGASRRLRHEDKVPAILYGGQGEPIALALDHNKVNNMADYEAFYSHIVTLEFDGKKHQAILKDMQRHPYKPKLTHLDFQRVEKGHKLHTNLPLHFLNETTAKGVKEEGGVVVHHVNDVEITVLPKDLPEYLEVDIAELSVGDTIHLTDLKLPKGVELVELTKGEDHDQAVVSITAPRVEKEETEEDTVAPGDVPAENSKDADEE.

The interval 192 to 221 (APRVEKEETEEDTVAPGDVPAENSKDADEE) is disordered.

This sequence belongs to the bacterial ribosomal protein bL25 family. CTC subfamily. In terms of assembly, part of the 50S ribosomal subunit; part of the 5S rRNA/L5/L18/L25 subcomplex. Contacts the 5S rRNA. Binds to the 5S rRNA independently of L5 and L18.

Its function is as follows. This is one of the proteins that binds to the 5S RNA in the ribosome where it forms part of the central protuberance. This is Large ribosomal subunit protein bL25 from Idiomarina loihiensis (strain ATCC BAA-735 / DSM 15497 / L2-TR).